Reading from the N-terminus, the 178-residue chain is Ribosome maturation factor RimP (178 aa).

Belongs to the RimP family.

It localises to the cytoplasm. In terms of biological role, required for maturation of 30S ribosomal subunits. This is Ribosome maturation factor RimP from Mycolicibacterium gilvum (strain PYR-GCK) (Mycobacterium gilvum (strain PYR-GCK)).